A 275-amino-acid polypeptide reads, in one-letter code: Translation initiation factor 2 subunit alpha (275 aa).

The region spanning 12-83 (GEFVVATVKN…EKGHIDLSLK (72 aa)) is the S1 motif domain.

It belongs to the eIF-2-alpha family. In terms of assembly, heterotrimer composed of an alpha, a beta and a gamma chain.

Functionally, eIF-2 functions in the early steps of protein synthesis by forming a ternary complex with GTP and initiator tRNA. The sequence is that of Translation initiation factor 2 subunit alpha from Thermococcus kodakarensis (strain ATCC BAA-918 / JCM 12380 / KOD1) (Pyrococcus kodakaraensis (strain KOD1)).